A 453-amino-acid polypeptide reads, in one-letter code: Proton extrusion protein PxcA (453 aa).

The disordered stretch occupies residues 147 to 189 (SQDKETQTLDNKSTNQTNSKLSNNNKISSGQNDSRLESASQKT). Positions 154-163 (TLDNKSTNQT) are enriched in polar residues. Positions 164 to 175 (NSKLSNNNKISS) are enriched in low complexity. A compositionally biased stretch (polar residues) spans 176–189 (GQNDSRLESASQKT). Transmembrane regions (helical) follow at residues 235 to 255 (FILL…TFLL), 330 to 350 (SIGN…VIVS), 377 to 397 (LIIL…WEVI), and 413 to 433 (FNFL…KYWI).

The protein belongs to the CemA family.

The protein localises to the cell inner membrane. Its function is as follows. Required for H(+) efflux immediately after light irradiation to form a rapid H(+) concentration gradient across the thylakoid membranes. Together with PxcL, contributes to transient H(+) uptake following dark to light transition. The protein is Proton extrusion protein PxcA of Crocosphaera subtropica (strain ATCC 51142 / BH68) (Cyanothece sp. (strain ATCC 51142)).